Here is a 318-residue protein sequence, read N- to C-terminus: Taste receptor type 2 member 60 (318 aa).

Over 1–7 (MNGDHMV) the chain is Extracellular. Residues 8–28 (LGSSVTDKKAIILVTILLLLR) traverse the membrane as a helical segment. The Cytoplasmic portion of the chain corresponds to 29-40 (LVAIAGNGFITA). Residues 41-61 (ALGVEWVLRRMLLPCDKLLVS) traverse the membrane as a helical segment. The Extracellular portion of the chain corresponds to 62 to 88 (LGASHFCLQSVVMGKTIYVFLYPMAFP). A helical transmembrane segment spans residues 89–109 (YNPVLQFLAFQWDFLNAATLW). Residues 110-128 (FSTWLSVFYCVKIATFTHP) lie on the Cytoplasmic side of the membrane. A helical membrane pass occupies residues 129–149 (VFFWLKHKLSGWLPWMIFSYV). At 150–183 (GLSSFTTILFFIGNHRMYQNYLKNHLQPWNVTGN) the chain is on the extracellular side. Residue N179 is glycosylated (N-linked (GlcNAc...) asparagine). Residues 184 to 204 (SIRSYCEKFYLFPLKMITWTM) traverse the membrane as a helical segment. At 205 to 234 (PTAVFFICMILLITSLGRHMKKALLTTSGF) the chain is on the cytoplasmic side. Residues 235–255 (REPSVQAHIKALLALLSFAML) traverse the membrane as a helical segment. The Extracellular segment spans residues 256–264 (FISYFLSLV). Residues 265–285 (FSAAGIFPPLDFKFWVWESVI) traverse the membrane as a helical segment. At 286–318 (YLCAAVHPIILLFSNCRLRAVLKSRRSSRCGTP) the chain is on the cytoplasmic side.

Belongs to the G-protein coupled receptor T2R family.

It is found in the membrane. Receptor that may play a role in the perception of bitterness and is gustducin-linked. May play a role in sensing the chemical composition of the gastrointestinal content. The activity of this receptor may stimulate alpha gustducin, mediate PLC-beta-2 activation and lead to the gating of TRPM5. The protein is Taste receptor type 2 member 60 (TAS2R60) of Pan paniscus (Pygmy chimpanzee).